The following is a 213-amino-acid chain: ATP phosphoribosyltransferase (213 aa).

This sequence belongs to the ATP phosphoribosyltransferase family. Short subfamily. In terms of assembly, heteromultimer composed of HisG and HisZ subunits.

Its subcellular location is the cytoplasm. The catalysed reaction is 1-(5-phospho-beta-D-ribosyl)-ATP + diphosphate = 5-phospho-alpha-D-ribose 1-diphosphate + ATP. The protein operates within amino-acid biosynthesis; L-histidine biosynthesis; L-histidine from 5-phospho-alpha-D-ribose 1-diphosphate: step 1/9. Its function is as follows. Catalyzes the condensation of ATP and 5-phosphoribose 1-diphosphate to form N'-(5'-phosphoribosyl)-ATP (PR-ATP). Has a crucial role in the pathway because the rate of histidine biosynthesis seems to be controlled primarily by regulation of HisG enzymatic activity. The protein is ATP phosphoribosyltransferase (hisG) of Listeria innocua serovar 6a (strain ATCC BAA-680 / CLIP 11262).